We begin with the raw amino-acid sequence, 929 residues long: Leucine--tRNA ligase (929 aa).

Residues 42 to 52 (PYPSGNLHMGH) carry the 'HIGH' region motif. The 'KMSKS' region signature appears at 614 to 618 (KMSKS). Residue Lys-617 coordinates ATP.

This sequence belongs to the class-I aminoacyl-tRNA synthetase family.

Its subcellular location is the cytoplasm. The catalysed reaction is tRNA(Leu) + L-leucine + ATP = L-leucyl-tRNA(Leu) + AMP + diphosphate. In Trichodesmium erythraeum (strain IMS101), this protein is Leucine--tRNA ligase.